Here is a 741-residue protein sequence, read N- to C-terminus: Catalase-peroxidase (741 aa).

The N-terminal stretch at 1–21 (MRNFRRFTIALLVLFLGPIGA) is a signal peptide. A cross-link (tryptophyl-tyrosyl-methioninium (Trp-Tyr) (with M-257)) is located at residues 109–231 (WHSAGTYRIS…LAAVQMGLIY (123 aa)). Histidine 110 acts as the Proton acceptor in catalysis. The segment at residues 231–257 (YVNPEGPNGNPDPLAAAKDIRETFGRM) is a cross-link (tryptophyl-tyrosyl-methioninium (Tyr-Met) (with W-109)). Histidine 272 lines the heme b pocket.

This sequence belongs to the peroxidase family. Peroxidase/catalase subfamily. In terms of assembly, homodimer or homotetramer. Requires heme b as cofactor. Post-translationally, formation of the three residue Trp-Tyr-Met cross-link is important for the catalase, but not the peroxidase activity of the enzyme.

The enzyme catalyses H2O2 + AH2 = A + 2 H2O. It catalyses the reaction 2 H2O2 = O2 + 2 H2O. Bifunctional enzyme with both catalase and broad-spectrum peroxidase activity. The chain is Catalase-peroxidase from Leptospira biflexa serovar Patoc (strain Patoc 1 / Ames).